A 414-amino-acid chain; its full sequence is Serine/threonine-protein kinase 32B (414 aa).

Positions 23–283 (FQILRAIGKG…LHDIQSVPYL (261 aa)) constitute a Protein kinase domain. Residues 29–37 (IGKGSFGKV) and K52 contribute to the ATP site. The active-site Proton acceptor is the D146. Residues 374 to 396 (QGQGSQLLDTDSRGGGQAQSKLQ) form a disordered region.

This sequence belongs to the protein kinase superfamily. Ser/Thr protein kinase family. The cofactor is Mg(2+).

It catalyses the reaction L-seryl-[protein] + ATP = O-phospho-L-seryl-[protein] + ADP + H(+). It carries out the reaction L-threonyl-[protein] + ATP = O-phospho-L-threonyl-[protein] + ADP + H(+). The protein is Serine/threonine-protein kinase 32B of Homo sapiens (Human).